The primary structure comprises 500 residues: Keratin, type II cuticular Hb1 (500 aa).

The segment at 1 to 106 (MTCGSGFRGR…PNAQCVKQEE (106 aa)) is head. Residues 106 to 417 (EKEQIKCLNN…RLLEGEEQRL (312 aa)) form the IF rod domain. The interval 107-141 (KEQIKCLNNRFAAFIDKVRFLEQQNKLLETKLQFY) is coil 1A. A linker 1 region spans residues 142 to 151 (QNRQCCESNL). Residues 152 to 252 (EPLFNGYIET…YEEEIRVLQA (101 aa)) are coil 1B. A Glycyl lysine isopeptide (Lys-Gly) (interchain with G-Cter in SUMO1) cross-link involves residue lysine 212. The segment at 253–269 (HISDTSVIVKMDNSRDL) is linker 12. Residues 270–413 (NMDNIVAEIK…ATYRRLLEGE (144 aa)) form a coil 2 region. A tail region spans residues 414-500 (EQRLCEGVGS…GSCASVCRKC (87 aa)).

It belongs to the intermediate filament family. Heterotetramer of two type I and two type II keratins.

This Bos taurus (Bovine) protein is Keratin, type II cuticular Hb1.